An 874-amino-acid polypeptide reads, in one-letter code: Alanine--tRNA ligase (874 aa).

Residues His562, His566, Cys665, and His669 each coordinate Zn(2+).

This sequence belongs to the class-II aminoacyl-tRNA synthetase family. It depends on Zn(2+) as a cofactor.

Its subcellular location is the cytoplasm. The catalysed reaction is tRNA(Ala) + L-alanine + ATP = L-alanyl-tRNA(Ala) + AMP + diphosphate. Catalyzes the attachment of alanine to tRNA(Ala) in a two-step reaction: alanine is first activated by ATP to form Ala-AMP and then transferred to the acceptor end of tRNA(Ala). Also edits incorrectly charged Ser-tRNA(Ala) and Gly-tRNA(Ala) via its editing domain. This Stutzerimonas stutzeri (strain A1501) (Pseudomonas stutzeri) protein is Alanine--tRNA ligase.